A 389-amino-acid chain; its full sequence is Formate-dependent phosphoribosylglycinamide formyltransferase (389 aa).

Residues 15 to 16 (EL) and Glu75 each bind N(1)-(5-phospho-beta-D-ribosyl)glycinamide. ATP is bound by residues Arg107, Lys148, 153-158 (SSGKGQ), 188-191 (EEFL), and Glu196. Positions 112–302 (NLAAGELGLR…EFDLHLRAVL (191 aa)) constitute an ATP-grasp domain. Mg(2+)-binding residues include Glu261 and Glu273. Residues Asp280, Lys350, and 357 to 358 (RR) contribute to the N(1)-(5-phospho-beta-D-ribosyl)glycinamide site.

Belongs to the PurK/PurT family. In terms of assembly, homodimer.

The catalysed reaction is N(1)-(5-phospho-beta-D-ribosyl)glycinamide + formate + ATP = N(2)-formyl-N(1)-(5-phospho-beta-D-ribosyl)glycinamide + ADP + phosphate + H(+). It functions in the pathway purine metabolism; IMP biosynthesis via de novo pathway; N(2)-formyl-N(1)-(5-phospho-D-ribosyl)glycinamide from N(1)-(5-phospho-D-ribosyl)glycinamide (formate route): step 1/1. In terms of biological role, involved in the de novo purine biosynthesis. Catalyzes the transfer of formate to 5-phospho-ribosyl-glycinamide (GAR), producing 5-phospho-ribosyl-N-formylglycinamide (FGAR). Formate is provided by PurU via hydrolysis of 10-formyl-tetrahydrofolate. The sequence is that of Formate-dependent phosphoribosylglycinamide formyltransferase from Synechococcus sp. (strain CC9311).